The sequence spans 134 residues: Large ribosomal subunit protein uL14 (134 aa).

It belongs to the universal ribosomal protein uL14 family. Part of the 50S ribosomal subunit. Forms a cluster with proteins L3 and L19. In the 70S ribosome, L14 and L19 interact and together make contacts with the 16S rRNA in bridges B5 and B8.

Binds to 23S rRNA. Forms part of two intersubunit bridges in the 70S ribosome. The protein is Large ribosomal subunit protein uL14 of Deinococcus geothermalis (strain DSM 11300 / CIP 105573 / AG-3a).